The following is a 277-amino-acid chain: Phosphatidylglycerol--prolipoprotein diacylglyceryl transferase (277 aa).

Transmembrane regions (helical) follow at residues 18–38 (ISVK…LLLA), 51–71 (IIVD…RIYY), 89–109 (IWHG…TAII), and 116–136 (ISFW…QAIG). Residue R137 participates in a 1,2-diacyl-sn-glycero-3-phospho-(1'-sn-glycerol) binding. The next 3 membrane-spanning stretches (helical) occupy residues 177–197 (QPTF…LLII), 205–225 (GELF…IEGM), and 235–255 (FRVS…IIIY).

This sequence belongs to the Lgt family.

It is found in the cell membrane. It catalyses the reaction L-cysteinyl-[prolipoprotein] + a 1,2-diacyl-sn-glycero-3-phospho-(1'-sn-glycerol) = an S-1,2-diacyl-sn-glyceryl-L-cysteinyl-[prolipoprotein] + sn-glycerol 1-phosphate + H(+). Its pathway is protein modification; lipoprotein biosynthesis (diacylglyceryl transfer). Catalyzes the transfer of the diacylglyceryl group from phosphatidylglycerol to the sulfhydryl group of the N-terminal cysteine of a prolipoprotein, the first step in the formation of mature lipoproteins. This chain is Phosphatidylglycerol--prolipoprotein diacylglyceryl transferase, found in Listeria monocytogenes serotype 4a (strain HCC23).